The chain runs to 327 residues: GMP reductase (327 aa).

Catalysis depends on Cys-175, which acts as the Thioimidate intermediate. Position 204-227 (204-227) interacts with NADP(+); sequence IIADGGIRTHGDIAKSIRFGASMV.

The protein belongs to the IMPDH/GMPR family. GuaC type 2 subfamily.

It catalyses the reaction IMP + NH4(+) + NADP(+) = GMP + NADPH + 2 H(+). Catalyzes the irreversible NADPH-dependent deamination of GMP to IMP. It functions in the conversion of nucleobase, nucleoside and nucleotide derivatives of G to A nucleotides, and in maintaining the intracellular balance of A and G nucleotides. The protein is GMP reductase of Oceanobacillus iheyensis (strain DSM 14371 / CIP 107618 / JCM 11309 / KCTC 3954 / HTE831).